Consider the following 443-residue polypeptide: Threonine/serine transporter TdcC (443 aa).

The next 11 helical transmembrane spans lie at 22-42 (TTWT…FFPI), 44-64 (AGFG…PIAF), 97-117 (GVVI…IYGV), 140-160 (FVAL…KDLM), 163-183 (VMSY…LSLI), 207-227 (ILVT…FSPI), 259-279 (ASML…FTLS), 319-339 (ASII…LGTL), 366-386 (ISMI…PNIL), 389-409 (IEAM…MYAI), and 423-443 (DNVF…YKLF).

This sequence belongs to the amino acid/polyamine transporter 2 family. SdaC/TdcC subfamily.

The protein localises to the cell inner membrane. The catalysed reaction is L-threonine(in) + H(+)(in) = L-threonine(out) + H(+)(out). The enzyme catalyses L-serine(in) + H(+)(in) = L-serine(out) + H(+)(out). Involved in the import of threonine and serine into the cell, with the concomitant import of a proton (symport system). The chain is Threonine/serine transporter TdcC from Salmonella newport (strain SL254).